We begin with the raw amino-acid sequence, 66 residues long: Photosystem II reaction center protein J (66 aa).

Positions 1–25 (MSGKKSPYPDGRIPDRNPDGTPAVP) are disordered. A helical membrane pass occupies residues 37 to 57 (LWLVATAGGMAVLFVVGLFFY).

Belongs to the PsbJ family. As to quaternary structure, PSII is composed of 1 copy each of membrane proteins PsbA, PsbB, PsbC, PsbD, PsbE, PsbF, PsbH, PsbI, PsbJ, PsbK, PsbL, PsbM, PsbT, PsbX, PsbY, PsbZ, Psb30/Ycf12, peripheral proteins PsbO, CyanoQ (PsbQ), PsbU, PsbV and a large number of cofactors. It forms dimeric complexes.

The protein localises to the cellular thylakoid membrane. One of the components of the core complex of photosystem II (PSII). PSII is a light-driven water:plastoquinone oxidoreductase that uses light energy to abstract electrons from H(2)O, generating O(2) and a proton gradient subsequently used for ATP formation. It consists of a core antenna complex that captures photons, and an electron transfer chain that converts photonic excitation into a charge separation. The polypeptide is Photosystem II reaction center protein J (Synechococcus sp. (strain CC9605)).